We begin with the raw amino-acid sequence, 334 residues long: Glyceraldehyde-3-phosphate dehydrogenase (334 aa).

Residues 12-13 (TI) and glycine 111 contribute to the NAD(+) site. 140–142 (SCN) is a D-glyceraldehyde 3-phosphate binding site. Cysteine 141 serves as the catalytic Nucleophile. Arginine 167 contributes to the NAD(+) binding site. Residue 192–193 (HG) coordinates D-glyceraldehyde 3-phosphate. Glutamine 298 contacts NAD(+).

This sequence belongs to the glyceraldehyde-3-phosphate dehydrogenase family. In terms of assembly, homotetramer.

The protein resides in the cytoplasm. The enzyme catalyses D-glyceraldehyde 3-phosphate + phosphate + NADP(+) = (2R)-3-phospho-glyceroyl phosphate + NADPH + H(+). It catalyses the reaction D-glyceraldehyde 3-phosphate + phosphate + NAD(+) = (2R)-3-phospho-glyceroyl phosphate + NADH + H(+). It functions in the pathway carbohydrate degradation; glycolysis; pyruvate from D-glyceraldehyde 3-phosphate: step 1/5. The sequence is that of Glyceraldehyde-3-phosphate dehydrogenase from Thermococcus kodakarensis (strain ATCC BAA-918 / JCM 12380 / KOD1) (Pyrococcus kodakaraensis (strain KOD1)).